Consider the following 372-residue polypeptide: MLKLVENVVERVSAEEQKPQEIQVPQSSIDEELKKIVEQIKARIYVVGVGGAGCNTVNRMMEVGVTGAKIIAVNTDAQDLLKIKAHQKILIGKELTRGLGAGNDPKIGEEAAKESERELREALEGADMVFVTCGLGGGTGTGAAPVIAEMAKKMGALTVSVVTLPFTMEGIRRAKNAEYGLKRLAKASDTVIVIPNDKLLEVAPKLPIQMAFKVADEILVQAVKGITELITKPGLVNLDFNDVRAVMKDGGVAMIGIGESDSEKRALEAAEQALNSPLLDVDISGAKGALISISGADVKLEEAQQIIEYVTRNVDPKAQVIWGIQLEPELEKTIRVMVIVTGVTSRYITFQEETPEPSEEEVPPVKIDIPEL.

GTP is bound by residues 51–55, 138–140, glutamate 169, arginine 173, and aspartate 216; these read GAGCN and GTG. Residues 351–372 are disordered; the sequence is QEETPEPSEEEVPPVKIDIPEL. The span at 353–362 shows a compositional bias: acidic residues; the sequence is ETPEPSEEEV.

This sequence belongs to the FtsZ family. As to quaternary structure, homodimer. Polymerizes to form a dynamic ring structure in a strictly GTP-dependent manner. Interacts directly with several other division proteins.

It localises to the cytoplasm. Essential cell division protein that forms a contractile ring structure (Z ring) at the future cell division site. The regulation of the ring assembly controls the timing and the location of cell division. One of the functions of the FtsZ ring is to recruit other cell division proteins to the septum to produce a new cell wall between the dividing cells. Binds GTP and shows GTPase activity. The sequence is that of Cell division protein FtsZ 1 from Pyrococcus abyssi (strain GE5 / Orsay).